Here is a 415-residue protein sequence, read N- to C-terminus: F-box/kelch-repeat protein At2g29600 (415 aa).

The segment at 1–58 (MASISETSDDGSNGGDPNQKPEEPHKNPQEGKEEENQNEKPKEDDHQEEEVENVPQIP) is disordered. The segment covering 19–45 (QKPEEPHKNPQEGKEEENQNEKPKEDD) has biased composition (basic and acidic residues). Positions 56 to 103 (QIPPQMPLELIVSTIATLRRCHYPTLSLLSDSFRQVISSVDLFQTRSL) constitute an F-box domain. 4 Kelch repeats span residues 161–208 (KIYV…VIDG), 210–254 (IYVV…FNVH), 260–309 (KIYI…AVVP), and 311–355 (HLHV…KLMI).

This chain is F-box/kelch-repeat protein At2g29600, found in Arabidopsis thaliana (Mouse-ear cress).